Reading from the N-terminus, the 171-residue chain is Putative phosphoesterase BPUM_1117 (171 aa).

The active-site Proton donor is the H34. 2 consecutive short sequence motifs (HXTX) follow at residues 34 to 37 (HLTL) and 115 to 118 (HVTV). Catalysis depends on H115, which acts as the Proton acceptor.

Belongs to the 2H phosphoesterase superfamily. YjcG family.

In Bacillus pumilus (strain SAFR-032), this protein is Putative phosphoesterase BPUM_1117.